An 826-amino-acid polypeptide reads, in one-letter code: Prominin-1-A (826 aa).

Helical transmembrane passes span 50–70 (YYEP…LFVV), 106–126 (VVCA…GLLF), and 153–173 (LLTT…LCAY). Residues Asn-178, Asn-268, Asn-286, Asn-327, Asn-388, and Asn-404 are each glycosylated (N-linked (GlcNAc...) asparagine). The next 2 membrane-spanning stretches (helical) occupy residues 439–459 (CMIV…ILGF) and 483–503 (VGFS…LFLA). Residues Asn-576, Asn-582, Asn-617, and Asn-693 are each glycosylated (N-linked (GlcNAc...) asparagine).

It belongs to the prominin family.

The protein localises to the apical cell membrane. The protein resides in the cell projection. It is found in the microvillus membrane. It localises to the endoplasmic reticulum. Its subcellular location is the endoplasmic reticulum-Golgi intermediate compartment. In terms of biological role, may play a role in cell differentiation, proliferation and apoptosis. Binds cholesterol in cholesterol-containing plasma membrane microdomains and may play a role in the organization of the apical plasma membrane in epithelial cells. Involved in regulation of MAPK and Akt signaling pathways. The sequence is that of Prominin-1-A (prom1a) from Danio rerio (Zebrafish).